Here is a 436-residue protein sequence, read N- to C-terminus: Trigger factor (436 aa).

The 86-residue stretch at 163–248 (GDRVTIDFEG…VKKIEAAHLP (86 aa)) folds into the PPIase FKBP-type domain.

It belongs to the FKBP-type PPIase family. Tig subfamily.

The protein resides in the cytoplasm. The enzyme catalyses [protein]-peptidylproline (omega=180) = [protein]-peptidylproline (omega=0). Involved in protein export. Acts as a chaperone by maintaining the newly synthesized protein in an open conformation. Functions as a peptidyl-prolyl cis-trans isomerase. The chain is Trigger factor from Polaromonas naphthalenivorans (strain CJ2).